The chain runs to 385 residues: Flap endonuclease 1 (385 aa).

The segment at M1–R104 is N-domain. D34 contributes to the Mg(2+) binding site. Positions 47 and 70 each coordinate DNA. Mg(2+) contacts are provided by D86, E158, E160, D179, and D181. An I-domain region spans residues G122–Y253. E158 serves as a coordination point for DNA. Residues G231 and D233 each coordinate DNA. A Mg(2+)-binding site is contributed by D233. Residues T336–F344 form an interaction with PCNA region. A disordered region spans residues T346–K385. Positions A368 to K385 are enriched in basic residues.

This sequence belongs to the XPG/RAD2 endonuclease family. FEN1 subfamily. As to quaternary structure, interacts with PCNA. Three molecules of FEN1 bind to one PCNA trimer with each molecule binding to one PCNA monomer. PCNA stimulates the nuclease activity without altering cleavage specificity. It depends on Mg(2+) as a cofactor. Phosphorylated. Phosphorylation upon DNA damage induces relocalization to the nuclear plasma.

It is found in the nucleus. The protein localises to the nucleolus. Its subcellular location is the nucleoplasm. The protein resides in the mitochondrion. Structure-specific nuclease with 5'-flap endonuclease and 5'-3' exonuclease activities involved in DNA replication and repair. During DNA replication, cleaves the 5'-overhanging flap structure that is generated by displacement synthesis when DNA polymerase encounters the 5'-end of a downstream Okazaki fragment. It enters the flap from the 5'-end and then tracks to cleave the flap base, leaving a nick for ligation. Also involved in the long patch base excision repair (LP-BER) pathway, by cleaving within the apurinic/apyrimidinic (AP) site-terminated flap. Acts as a genome stabilization factor that prevents flaps from equilibrating into structures that lead to duplications and deletions. Also possesses 5'-3' exonuclease activity on nicked or gapped double-stranded DNA, and exhibits RNase H activity. Also involved in replication and repair of rDNA and in repairing mitochondrial DNA. The protein is Flap endonuclease 1 of Drosophila simulans (Fruit fly).